The sequence spans 452 residues: Exodeoxyribonuclease 7 large subunit (452 aa).

Belongs to the XseA family. In terms of assembly, heterooligomer composed of large and small subunits.

Its subcellular location is the cytoplasm. It carries out the reaction Exonucleolytic cleavage in either 5'- to 3'- or 3'- to 5'-direction to yield nucleoside 5'-phosphates.. Its function is as follows. Bidirectionally degrades single-stranded DNA into large acid-insoluble oligonucleotides, which are then degraded further into small acid-soluble oligonucleotides. This Bordetella avium (strain 197N) protein is Exodeoxyribonuclease 7 large subunit.